A 1405-amino-acid chain; its full sequence is DNA-directed RNA polymerase subunit beta' (1405 aa).

4 residues coordinate Zn(2+): C71, C73, C86, and C89. Positions 462, 464, and 466 each coordinate Mg(2+). Residues C820, C893, C900, and C903 each coordinate Zn(2+).

The protein belongs to the RNA polymerase beta' chain family. As to quaternary structure, the RNAP catalytic core consists of 2 alpha, 1 beta, 1 beta' and 1 omega subunit. When a sigma factor is associated with the core the holoenzyme is formed, which can initiate transcription. Mg(2+) serves as cofactor. The cofactor is Zn(2+).

The catalysed reaction is RNA(n) + a ribonucleoside 5'-triphosphate = RNA(n+1) + diphosphate. DNA-dependent RNA polymerase catalyzes the transcription of DNA into RNA using the four ribonucleoside triphosphates as substrates. This Methylorubrum populi (strain ATCC BAA-705 / NCIMB 13946 / BJ001) (Methylobacterium populi) protein is DNA-directed RNA polymerase subunit beta'.